We begin with the raw amino-acid sequence, 459 residues long: Methionine aminopeptidase 2-1 (459 aa).

The segment covering 1 to 12 (MGSKSPEDHRQG) has biased composition (basic and acidic residues). Positions 1-79 (MGSKSPEDHR…RKRNKKKSKK (79 aa)) are disordered. A compositionally biased stretch (acidic residues) spans 43–54 (GQDEDGDDDDDE). Positions 67 to 79 (KKKRKRNKKKSKK) are enriched in basic residues. Substrate is bound at residue histidine 210. A divalent metal cation is bound by residues aspartate 231, aspartate 242, and histidine 311. Histidine 319 contributes to the substrate binding site. Residues glutamate 344 and glutamate 440 each coordinate a divalent metal cation.

Belongs to the peptidase M24A family. Methionine aminopeptidase eukaryotic type 2 subfamily. The cofactor is Co(2+). It depends on Zn(2+) as a cofactor. Requires Mn(2+) as cofactor. Fe(2+) is required as a cofactor.

It localises to the cytoplasm. It carries out the reaction Release of N-terminal amino acids, preferentially methionine, from peptides and arylamides.. Its function is as follows. Cotranslationally removes the N-terminal methionine from nascent proteins. The N-terminal methionine is often cleaved when the second residue in the primary sequence is small and uncharged (Met-Ala-, Cys, Gly, Pro, Ser, Thr, or Val). This is Methionine aminopeptidase 2-1 from Pyrenophora tritici-repentis (strain Pt-1C-BFP) (Wheat tan spot fungus).